Reading from the N-terminus, the 403-residue chain is Phosphopentomutase (403 aa).

Positions 13, 298, 303, 339, 340, and 351 each coordinate Mn(2+).

The protein belongs to the phosphopentomutase family. Mn(2+) serves as cofactor.

Its subcellular location is the cytoplasm. It carries out the reaction 2-deoxy-alpha-D-ribose 1-phosphate = 2-deoxy-D-ribose 5-phosphate. The enzyme catalyses alpha-D-ribose 1-phosphate = D-ribose 5-phosphate. It functions in the pathway carbohydrate degradation; 2-deoxy-D-ribose 1-phosphate degradation; D-glyceraldehyde 3-phosphate and acetaldehyde from 2-deoxy-alpha-D-ribose 1-phosphate: step 1/2. Functionally, isomerase that catalyzes the conversion of deoxy-ribose 1-phosphate (dRib-1-P) and ribose 1-phosphate (Rib-1-P) to deoxy-ribose 5-phosphate (dRib-5-P) and ribose 5-phosphate (Rib-5-P), respectively. The protein is Phosphopentomutase of Streptococcus pyogenes serotype M18 (strain MGAS8232).